The following is a 418-amino-acid chain: UDP-N-acetylglucosamine 1-carboxyvinyltransferase (418 aa).

22-23 (KN) contacts phosphoenolpyruvate. Residue Arg-92 coordinates UDP-N-acetyl-alpha-D-glucosamine. The active-site Proton donor is the Cys-116. Cys-116 carries the post-translational modification 2-(S-cysteinyl)pyruvic acid O-phosphothioketal. UDP-N-acetyl-alpha-D-glucosamine is bound by residues 121-125 (RPIDL), Asp-305, and Leu-327.

This sequence belongs to the EPSP synthase family. MurA subfamily.

It localises to the cytoplasm. The enzyme catalyses phosphoenolpyruvate + UDP-N-acetyl-alpha-D-glucosamine = UDP-N-acetyl-3-O-(1-carboxyvinyl)-alpha-D-glucosamine + phosphate. It functions in the pathway cell wall biogenesis; peptidoglycan biosynthesis. Cell wall formation. Adds enolpyruvyl to UDP-N-acetylglucosamine. The chain is UDP-N-acetylglucosamine 1-carboxyvinyltransferase from Campylobacter jejuni (strain RM1221).